Here is a 3795-residue protein sequence, read N- to C-terminus: NBPF family member NBPF10 (3795 aa).

Residues 75–119 (RQFKEEKLAEQLKQAEELRQYKVLVHSQERELTQLREKLREGRDA) adopt a coiled-coil conformation. Residues 161-200 (KLSPENDEDEDEDVQVEEAEKVLESSAPREVQKAEESKVP) are disordered. Over residues 165 to 177 (ENDEDEDEDVQVE) the composition is skewed to acidic residues. Positions 165-259 (ENDEDEDEDV…ECQDALNILP (95 aa)) constitute an Olduvai 1 domain. A compositionally biased stretch (basic and acidic residues) spans 190-200 (EVQKAEESKVP). Residues 346–390 (RQFKEEKLAEQLKQAEELRQYKVLVHAQERELTQLKEKLREGRDA) adopt a coiled-coil conformation. Olduvai domains follow at residues 436–528 (ENDN…HIIP), 529–600 (ENES…VDIG), 601–692 (RHRW…PSCP), 695–750 (SREL…LDVD), 751–843 (RIKK…RSKK), 844–936 (ERRR…PSCP), 939–994 (SREL…LDVD), 995–1087 (RIKK…RSKK), 1088–1180 (ERRR…PSCP), 1183–1238 (SREL…LDVD), 1239–1331 (RIKK…RSKK), 1332–1424 (ERRR…PSCP), 1427–1482 (SREL…LDVD), 1483–1575 (RIKK…RSKK), 1576–1668 (ERRR…PSCP), 1671–1726 (SREL…LDVD), 1727–1819 (RIKK…RSKK), 1820–1912 (ERRR…PSCP), 1915–1970 (SREL…LDVD), 1971–2063 (RIKK…RSKK), 2064–2156 (ERRR…PSCP), 2159–2214 (SREL…LDVD), 2215–2307 (RIKK…RSKK), 2308–2400 (ERRR…PSCP), 2403–2458 (SREL…LDVD), 2459–2551 (RIKK…RSKK), 2552–2644 (ERRR…PSCP), 2647–2702 (SREL…LDVD), 2703–2795 (RIKK…RSKK), 2796–2888 (ERRR…PSCP), 2891–2946 (SREL…LDVD), 2947–3039 (RIKK…RSKK), 3040–3132 (ERRR…PSCP), 3135–3190 (SREL…LDVD), 3191–3283 (RIKK…RSKK), 3284–3376 (ERRR…PSCP), 3379–3434 (SREL…LDVD), 3435–3527 (RIKK…RSKK), 3528–3620 (ERRR…PSCP), 3623–3696 (SREL…RSKK), and 3697–3795 (ERRR…IFPQ). Disordered stretches follow at residues 451 to 475 (EKVQ…EDSL) and 520 to 566 (WEDA…EGYS). 2 stretches are compositionally biased toward acidic residues: residues 530–539 (NESDDEEEEE) and 550–562 (ESEE…ESWD). A disordered region spans residues 830–868 (KGKGKKRRGRRSKKERRRGRKEGEEDQNPPCPRLSRELL). The span at 831–849 (GKGKKRRGRRSKKERRRGR) shows a compositional bias: basic residues. The interval 1073–1109 (KKGKGKKRRGRRSKKERRRGRKEGEEDQNPPCPRLSR) is disordered. Residues 1075-1093 (GKGKKRRGRRSKKERRRGR) are compositionally biased toward basic residues. 2 disordered regions span residues 1242-1261 (KDEE…SREL) and 1318-1353 (KGKG…RLSR). Basic residues predominate over residues 1319–1337 (GKGKKRRGRRSKKERRRGR). Positions 1562 to 1600 (KGKGKKRRGRRSKKERRRGRKEGEEDQNPPCPRLSRELL) are disordered. Residues 1563–1581 (GKGKKRRGRRSKKERRRGR) show a composition bias toward basic residues. Positions 1806–1844 (KGKGKKRRGRRSKKERRRGRKEGEEDQNPPCPRLSRELL) are disordered. Residues 1807–1825 (GKGKKRRGRRSKKERRRGR) are compositionally biased toward basic residues. A disordered region spans residues 2050–2088 (KGKGKKRRGRRSKKERRRGRKEGEEDQNPPCPRLSRELL). The segment covering 2051–2069 (GKGKKRRGRRSKKERRRGR) has biased composition (basic residues). Positions 2294–2332 (KGKGKKRRGRRSKKERRRGRKEGEEDQNPPCPRLSRELL) are disordered. The span at 2295-2313 (GKGKKRRGRRSKKERRRGR) shows a compositional bias: basic residues. Residues 2538-2576 (KGKGKKRRGRRSKKERRRGRKEGEEDQNPPCPRLSRELL) form a disordered region. Residues 2539–2557 (GKGKKRRGRRSKKERRRGR) show a composition bias toward basic residues. The tract at residues 2782–2820 (KGKGKKRRGRRSKKERRRGRKEGEEDQNPPCPRLSRELL) is disordered. A compositionally biased stretch (basic residues) spans 2783-2801 (GKGKKRRGRRSKKERRRGR). The disordered stretch occupies residues 3026–3064 (KGKGKKRRGRRSKKERRRGRKEGEEDQNPPCPRLSRELL). Positions 3027–3045 (GKGKKRRGRRSKKERRRGR) are enriched in basic residues. 2 disordered regions span residues 3194 to 3213 (KDEE…SREL) and 3270 to 3308 (KGKG…RELL). Residues 3271-3289 (GKGKKRRGRRSKKERRRGR) are compositionally biased toward basic residues. Disordered regions lie at residues 3514–3552 (KGKG…RELL) and 3684–3716 (GKGK…CPRL). Composition is skewed to basic residues over residues 3515-3533 (GKGK…RRGR) and 3684-3702 (GKGK…RRGR).

Belongs to the NBPF family.

The protein resides in the cytoplasm. This is NBPF family member NBPF10 from Homo sapiens (Human).